Reading from the N-terminus, the 284-residue chain is 2-dehydro-3-deoxyphosphooctonate aldolase (284 aa).

It belongs to the KdsA family.

It is found in the cytoplasm. The enzyme catalyses D-arabinose 5-phosphate + phosphoenolpyruvate + H2O = 3-deoxy-alpha-D-manno-2-octulosonate-8-phosphate + phosphate. It participates in carbohydrate biosynthesis; 3-deoxy-D-manno-octulosonate biosynthesis; 3-deoxy-D-manno-octulosonate from D-ribulose 5-phosphate: step 2/3. Its pathway is bacterial outer membrane biogenesis; lipopolysaccharide biosynthesis. The chain is 2-dehydro-3-deoxyphosphooctonate aldolase from Bordetella petrii (strain ATCC BAA-461 / DSM 12804 / CCUG 43448).